Consider the following 202-residue polypeptide: Nucleoside triphosphate pyrophosphatase (202 aa).

Residue Asp79 is the Proton acceptor of the active site.

It belongs to the Maf family. The cofactor is a divalent metal cation.

The protein localises to the cytoplasm. The catalysed reaction is a ribonucleoside 5'-triphosphate + H2O = a ribonucleoside 5'-phosphate + diphosphate + H(+). It catalyses the reaction a 2'-deoxyribonucleoside 5'-triphosphate + H2O = a 2'-deoxyribonucleoside 5'-phosphate + diphosphate + H(+). In terms of biological role, nucleoside triphosphate pyrophosphatase. May have a dual role in cell division arrest and in preventing the incorporation of modified nucleotides into cellular nucleic acids. The chain is Nucleoside triphosphate pyrophosphatase from Nitrobacter winogradskyi (strain ATCC 25391 / DSM 10237 / CIP 104748 / NCIMB 11846 / Nb-255).